Here is a 338-residue protein sequence, read N- to C-terminus: Ketol-acid reductoisomerase (NADP(+)) (338 aa).

Residues 3–183 (IELLYDADAD…GGARAGVIPT (181 aa)) enclose the KARI N-terminal Rossmann domain. Residues 26–29 (YGSQ), Arg49, Ser52, Ser54, and 84–87 (DTSQ) contribute to the NADP(+) site. Residue His109 is part of the active site. Gly135 is an NADP(+) binding site. One can recognise a KARI C-terminal knotted domain in the interval 184 to 329 (TFEAETVTDL…AKLRDLMSWV (146 aa)). Asp192, Glu196, Glu228, and Glu232 together coordinate Mg(2+). Substrate is bound at residue Ser253.

It belongs to the ketol-acid reductoisomerase family. It depends on Mg(2+) as a cofactor.

The enzyme catalyses (2R)-2,3-dihydroxy-3-methylbutanoate + NADP(+) = (2S)-2-acetolactate + NADPH + H(+). It carries out the reaction (2R,3R)-2,3-dihydroxy-3-methylpentanoate + NADP(+) = (S)-2-ethyl-2-hydroxy-3-oxobutanoate + NADPH + H(+). Its pathway is amino-acid biosynthesis; L-isoleucine biosynthesis; L-isoleucine from 2-oxobutanoate: step 2/4. It participates in amino-acid biosynthesis; L-valine biosynthesis; L-valine from pyruvate: step 2/4. Its function is as follows. Involved in the biosynthesis of branched-chain amino acids (BCAA). Catalyzes an alkyl-migration followed by a ketol-acid reduction of (S)-2-acetolactate (S2AL) to yield (R)-2,3-dihydroxy-isovalerate. In the isomerase reaction, S2AL is rearranged via a Mg-dependent methyl migration to produce 3-hydroxy-3-methyl-2-ketobutyrate (HMKB). In the reductase reaction, this 2-ketoacid undergoes a metal-dependent reduction by NADPH to yield (R)-2,3-dihydroxy-isovalerate. The protein is Ketol-acid reductoisomerase (NADP(+)) of Corynebacterium glutamicum (strain ATCC 13032 / DSM 20300 / JCM 1318 / BCRC 11384 / CCUG 27702 / LMG 3730 / NBRC 12168 / NCIMB 10025 / NRRL B-2784 / 534).